The sequence spans 376 residues: Queuine tRNA-ribosyltransferase (376 aa).

The active-site Proton acceptor is the aspartate 89. Residues 89-93 (DSGGF), aspartate 143, glutamine 194, and glycine 221 contribute to the substrate site. The RNA binding stretch occupies residues 252–258 (GVGTPAN). The Nucleophile role is filled by aspartate 271. Residues cysteine 309, cysteine 311, cysteine 314, and histidine 340 each contribute to the Zn(2+) site.

This sequence belongs to the queuine tRNA-ribosyltransferase family. As to quaternary structure, homodimer. Within each dimer, one monomer is responsible for RNA recognition and catalysis, while the other monomer binds to the replacement base PreQ1. Zn(2+) is required as a cofactor.

It carries out the reaction 7-aminomethyl-7-carbaguanine + guanosine(34) in tRNA = 7-aminomethyl-7-carbaguanosine(34) in tRNA + guanine. It functions in the pathway tRNA modification; tRNA-queuosine biosynthesis. Its function is as follows. Catalyzes the base-exchange of a guanine (G) residue with the queuine precursor 7-aminomethyl-7-deazaguanine (PreQ1) at position 34 (anticodon wobble position) in tRNAs with GU(N) anticodons (tRNA-Asp, -Asn, -His and -Tyr). Catalysis occurs through a double-displacement mechanism. The nucleophile active site attacks the C1' of nucleotide 34 to detach the guanine base from the RNA, forming a covalent enzyme-RNA intermediate. The proton acceptor active site deprotonates the incoming PreQ1, allowing a nucleophilic attack on the C1' of the ribose to form the product. After dissociation, two additional enzymatic reactions on the tRNA convert PreQ1 to queuine (Q), resulting in the hypermodified nucleoside queuosine (7-(((4,5-cis-dihydroxy-2-cyclopenten-1-yl)amino)methyl)-7-deazaguanosine). This Clostridium kluyveri (strain NBRC 12016) protein is Queuine tRNA-ribosyltransferase.